A 457-amino-acid chain; its full sequence is Tubulin alpha chain (457 aa).

Residues glutamine 12, glutamate 77, serine 146, glycine 150, threonine 151, threonine 186, asparagine 213, and asparagine 235 each coordinate GTP. Glutamate 77 is a binding site for Mg(2+).

The protein belongs to the tubulin family. Dimer of alpha and beta chains. A typical microtubule is a hollow water-filled tube with an outer diameter of 25 nm and an inner diameter of 15 nM. Alpha-beta heterodimers associate head-to-tail to form protofilaments running lengthwise along the microtubule wall with the beta-tubulin subunit facing the microtubule plus end conferring a structural polarity. Microtubules usually have 13 protofilaments but different protofilament numbers can be found in some organisms and specialized cells. It depends on Mg(2+) as a cofactor. In terms of processing, undergoes a tyrosination/detyrosination cycle, the cyclic removal and re-addition of a C-terminal tyrosine residue by the enzymes tubulin tyrosine carboxypeptidase (TTCP) and tubulin tyrosine ligase (TTL), respectively.

It is found in the cytoplasm. It localises to the cytoskeleton. The catalysed reaction is GTP + H2O = GDP + phosphate + H(+). In terms of biological role, tubulin is the major constituent of microtubules, a cylinder consisting of laterally associated linear protofilaments composed of alpha- and beta-tubulin heterodimers. Microtubules grow by the addition of GTP-tubulin dimers to the microtubule end, where a stabilizing cap forms. Below the cap, tubulin dimers are in GDP-bound state, owing to GTPase activity of alpha-tubulin. The chain is Tubulin alpha chain (tubA) from Dictyostelium discoideum (Social amoeba).